Consider the following 396-residue polypeptide: 1-deoxy-D-xylulose 5-phosphate reductoisomerase (396 aa).

Threonine 10, glycine 11, serine 12, isoleucine 13, asparagine 38, and asparagine 123 together coordinate NADPH. Position 124 (lysine 124) interacts with 1-deoxy-D-xylulose 5-phosphate. NADPH is bound at residue glutamate 125. Aspartate 149 is a binding site for Mn(2+). 1-deoxy-D-xylulose 5-phosphate contacts are provided by serine 150, glutamate 151, serine 185, and histidine 208. Glutamate 151 contacts Mn(2+). Glycine 214 is an NADPH binding site. Serine 221, asparagine 226, lysine 227, and glutamate 230 together coordinate 1-deoxy-D-xylulose 5-phosphate. Glutamate 230 is a Mn(2+) binding site.

Belongs to the DXR family. Mg(2+) is required as a cofactor. It depends on Mn(2+) as a cofactor.

It catalyses the reaction 2-C-methyl-D-erythritol 4-phosphate + NADP(+) = 1-deoxy-D-xylulose 5-phosphate + NADPH + H(+). It functions in the pathway isoprenoid biosynthesis; isopentenyl diphosphate biosynthesis via DXP pathway; isopentenyl diphosphate from 1-deoxy-D-xylulose 5-phosphate: step 1/6. In terms of biological role, catalyzes the NADPH-dependent rearrangement and reduction of 1-deoxy-D-xylulose-5-phosphate (DXP) to 2-C-methyl-D-erythritol 4-phosphate (MEP). This chain is 1-deoxy-D-xylulose 5-phosphate reductoisomerase, found in Shewanella piezotolerans (strain WP3 / JCM 13877).